Reading from the N-terminus, the 313-residue chain is UPF0252 protein AF_0384 (313 aa).

This sequence belongs to the UPF0252 family.

This chain is UPF0252 protein AF_0384, found in Archaeoglobus fulgidus (strain ATCC 49558 / DSM 4304 / JCM 9628 / NBRC 100126 / VC-16).